Reading from the N-terminus, the 371-residue chain is Photosynthetic reaction center cytochrome c subunit (371 aa).

Met-114, Cys-127, Cys-130, His-131, Met-153, His-167, Cys-178, Cys-181, His-182, Met-267, Cys-278, Cys-281, His-282, Cys-339, Cys-342, and His-343 together coordinate heme.

As to quaternary structure, component of the photosynthetic reaction center composed of protein subunits L (PufL), M (PufM), H (PuhA) and cytochrome C (PufC). The reaction center interacts with light-harvesting antenna complex LH1. In terms of processing, binds 4 heme groups per subunit.

The protein localises to the cellular chromatophore membrane. Its function is as follows. The reaction center of purple bacteria contains a tightly bound cytochrome molecule which re-reduces the photo oxidized primary electron donor. The chain is Photosynthetic reaction center cytochrome c subunit (pufC) from Roseobacter denitrificans (strain ATCC 33942 / OCh 114) (Erythrobacter sp. (strain OCh 114)).